Reading from the N-terminus, the 556-residue chain is DNA ligase B (556 aa).

The N6-AMP-lysine intermediate role is filled by K122.

The protein belongs to the NAD-dependent DNA ligase family. LigB subfamily.

It carries out the reaction NAD(+) + (deoxyribonucleotide)n-3'-hydroxyl + 5'-phospho-(deoxyribonucleotide)m = (deoxyribonucleotide)n+m + AMP + beta-nicotinamide D-nucleotide.. Catalyzes the formation of phosphodiester linkages between 5'-phosphoryl and 3'-hydroxyl groups in double-stranded DNA using NAD as a coenzyme and as the energy source for the reaction. This Enterobacter sp. (strain 638) protein is DNA ligase B.